The chain runs to 81 residues: Exodeoxyribonuclease 7 small subunit (81 aa).

A disordered region spans residues 59 to 81 (KLVDKDGNEKTLDPQNASAPEEE). A compositionally biased stretch (basic and acidic residues) spans 60–70 (LVDKDGNEKTL). The segment covering 71–81 (DPQNASAPEEE) has biased composition (polar residues).

Belongs to the XseB family. Heterooligomer composed of large and small subunits.

Its subcellular location is the cytoplasm. It carries out the reaction Exonucleolytic cleavage in either 5'- to 3'- or 3'- to 5'-direction to yield nucleoside 5'-phosphates.. Its function is as follows. Bidirectionally degrades single-stranded DNA into large acid-insoluble oligonucleotides, which are then degraded further into small acid-soluble oligonucleotides. The protein is Exodeoxyribonuclease 7 small subunit of Lactobacillus gasseri (strain ATCC 33323 / DSM 20243 / BCRC 14619 / CIP 102991 / JCM 1131 / KCTC 3163 / NCIMB 11718 / NCTC 13722 / AM63).